Reading from the N-terminus, the 376-residue chain is Proton extrusion protein PxcA (376 aa).

Helical transmembrane passes span 150–170 (TLISLKIILLLILVPLLVQQM), 251–271 (AVKNVLADIAALIAFAFVCII), 299–319 (IILFTDMFVGFHSPEGWQVLL), and 334–354 (FILLFIATFPVILATIFKYWI).

The protein belongs to the CemA family.

The protein localises to the cell inner membrane. In terms of biological role, required for H(+) efflux immediately after light irradiation to form a rapid H(+) concentration gradient across the thylakoid membranes. Together with PxcL, contributes to transient H(+) uptake following dark to light transition. This Prochlorococcus marinus (strain MIT 9303) protein is Proton extrusion protein PxcA.